A 64-amino-acid polypeptide reads, in one-letter code: Outer envelope membrane protein 7 (64 aa).

At 1 to 11 (MGKTSGAKQAT) the chain is on the chloroplast intermembrane side. The chain crosses the membrane as a helical span at residues 12–32 (VVVAAMALGWLAIEIAFKPFL). The AKR2A-binding sequence (ABS) required for chloroplast outer envelope membrane targeting motif lies at 29–35 (KPFLDKF). The Cytoplasmic portion of the chain corresponds to 33–64 (DKFRSSIDKSDPTKDPDDFDTAATATTSKEGL). The span at 39–48 (IDKSDPTKDP) shows a compositional bias: basic and acidic residues. Residues 39–64 (IDKSDPTKDPDDFDTAATATTSKEGL) are disordered. The span at 53–64 (TAATATTSKEGL) shows a compositional bias: low complexity.

Interacts with AKR2A. As to expression, confined to green tissues.

The protein localises to the plastid. It is found in the chloroplast outer membrane. The sequence is that of Outer envelope membrane protein 7 from Arabidopsis thaliana (Mouse-ear cress).